Consider the following 546-residue polypeptide: Chaperonin GroEL (546 aa).

ATP-binding positions include 30 to 33 (TLGP), lysine 51, 87 to 91 (DGTTT), glycine 415, 479 to 481 (NAA), and aspartate 495.

This sequence belongs to the chaperonin (HSP60) family. As to quaternary structure, forms a cylinder of 14 subunits composed of two heptameric rings stacked back-to-back. Interacts with the co-chaperonin GroES.

The protein resides in the cytoplasm. It catalyses the reaction ATP + H2O + a folded polypeptide = ADP + phosphate + an unfolded polypeptide.. Its function is as follows. Together with its co-chaperonin GroES, plays an essential role in assisting protein folding. The GroEL-GroES system forms a nano-cage that allows encapsulation of the non-native substrate proteins and provides a physical environment optimized to promote and accelerate protein folding. This Azotobacter vinelandii protein is Chaperonin GroEL.